We begin with the raw amino-acid sequence, 437 residues long: Protein farnesyltransferase subunit beta (437 aa).

5 PFTB repeats span residues 123 to 164 (ATDV…CIIG), 174 to 215 (REKL…SLTN), 222 to 263 (FEGT…VILK), 270 to 312 (LKSL…PLLH), and 332 to 374 (QQAL…SIAQ). Residues 248 to 251 (HGGY) and 291 to 294 (RCNK) each bind (2E,6E)-farnesyl diphosphate. Zn(2+) is bound by residues D297 and C299. Position 300–303 (300–303 (YSFW)) interacts with (2E,6E)-farnesyl diphosphate. H362 provides a ligand contact to Zn(2+). Residue S432 is modified to Phosphoserine. T436 is subject to Phosphothreonine.

It belongs to the protein prenyltransferase subunit beta family. In terms of assembly, heterodimer of FNTA and FNTB. Zn(2+) is required as a cofactor.

The enzyme catalyses L-cysteinyl-[protein] + (2E,6E)-farnesyl diphosphate = S-(2E,6E)-farnesyl-L-cysteinyl-[protein] + diphosphate. Functionally, essential subunit of the farnesyltransferase complex. Catalyzes the transfer of a farnesyl moiety from farnesyl diphosphate to a cysteine at the fourth position from the C-terminus of several proteins having the C-terminal sequence Cys-aliphatic-aliphatic-X. The sequence is that of Protein farnesyltransferase subunit beta (Fntb) from Mus musculus (Mouse).